Consider the following 411-residue polypeptide: Proline-responsive transcriptional activator PutR (411 aa).

Belongs to the CdaR family.

In terms of biological role, activates transcription of the putBCP operon. Requires proline as a coactivator. This chain is Proline-responsive transcriptional activator PutR, found in Bacillus subtilis (strain 168).